The sequence spans 35 residues: Photosystem II reaction center protein T (35 aa).

The chain crosses the membrane as a helical span at residues 3–23 (ALVYTFLLVGTLGIIFFAIFF).

The protein belongs to the PsbT family. PSII is composed of 1 copy each of membrane proteins PsbA, PsbB, PsbC, PsbD, PsbE, PsbF, PsbH, PsbI, PsbJ, PsbK, PsbL, PsbM, PsbT, PsbY, PsbZ, Psb30/Ycf12, at least 3 peripheral proteins of the oxygen-evolving complex and a large number of cofactors. It forms dimeric complexes.

The protein localises to the plastid. Its subcellular location is the chloroplast thylakoid membrane. Found at the monomer-monomer interface of the photosystem II (PS II) dimer, plays a role in assembly and dimerization of PSII. PSII is a light-driven water plastoquinone oxidoreductase, using light energy to abstract electrons from H(2)O, generating a proton gradient subsequently used for ATP formation. This Marchantia polymorpha (Common liverwort) protein is Photosystem II reaction center protein T.